A 360-amino-acid chain; its full sequence is NADH-quinone oxidoreductase subunit H (360 aa).

A run of 8 helical transmembrane segments spans residues 22-42 (ITVG…IPLI), 97-117 (ALFY…WAVI), 130-150 (IGLL…IIAG), 170-190 (ISYE…SGSM), 208-228 (VFSW…ISAV), 255-275 (GFAF…IAAL), 292-312 (WGFI…AVLY), and 336-356 (VLIP…ISPL).

The protein belongs to the complex I subunit 1 family. As to quaternary structure, NDH-1 is composed of 14 different subunits. Subunits NuoA, H, J, K, L, M, N constitute the membrane sector of the complex.

Its subcellular location is the cell inner membrane. The catalysed reaction is a quinone + NADH + 5 H(+)(in) = a quinol + NAD(+) + 4 H(+)(out). NDH-1 shuttles electrons from NADH, via FMN and iron-sulfur (Fe-S) centers, to quinones in the respiratory chain. The immediate electron acceptor for the enzyme in this species is believed to be ubiquinone. Couples the redox reaction to proton translocation (for every two electrons transferred, four hydrogen ions are translocated across the cytoplasmic membrane), and thus conserves the redox energy in a proton gradient. This subunit may bind ubiquinone. The protein is NADH-quinone oxidoreductase subunit H of Neisseria meningitidis serogroup C / serotype 2a (strain ATCC 700532 / DSM 15464 / FAM18).